The primary structure comprises 118 residues: Light-harvesting protein B-800/850 gamma chain (118 aa).

Its function is as follows. Seems to be required for the LH-II stabilization. This chain is Light-harvesting protein B-800/850 gamma chain (pucE), found in Rhodobacter capsulatus (Rhodopseudomonas capsulata).